Here is a 603-residue protein sequence, read N- to C-terminus: NADH-ubiquinone oxidoreductase chain 5 (603 aa).

16 helical membrane-spanning segments follow: residues 4–24 (YTTM…ATLI), 36–56 (VKMT…MFMC), 87–107 (MMFI…SLWY), 114–134 (INQF…LVTA), 137–157 (LFQL…LIGW), 171–191 (AILY…WFLL), 200–220 (QMIL…LLAA), 241–261 (TPVS…FLLI), 272–292 (LIQT…AICA), 301–320 (IVAF…IGIN), 325–347 (AFLH…GSII), 366–386 (LPLT…MPFL), 407–429 (WALS…MILL), 457–477 (LTIG…PTSP), 482–502 (IPLY…LTAF), and 583–603 (MIKL…LLIM).

It belongs to the complex I subunit 5 family. As to quaternary structure, core subunit of respiratory chain NADH dehydrogenase (Complex I) which is composed of 45 different subunits.

It localises to the mitochondrion inner membrane. It catalyses the reaction a ubiquinone + NADH + 5 H(+)(in) = a ubiquinol + NAD(+) + 4 H(+)(out). In terms of biological role, core subunit of the mitochondrial membrane respiratory chain NADH dehydrogenase (Complex I) which catalyzes electron transfer from NADH through the respiratory chain, using ubiquinone as an electron acceptor. Essential for the catalytic activity and assembly of complex I. This is NADH-ubiquinone oxidoreductase chain 5 (MT-ND5) from Hylobates lar (Lar gibbon).